The sequence spans 144 residues: FIMIKPDGVQRGLVGEIISRFEKKGFSLKGLKLITVDRAFAEKHYADLSAKPFFNGLVEYIVSGPVVAMVWEGKGVVATGRKIIGATNPLESAAGTIRGDFAIDIGRNVIHGSDAVESARKEIALWFPEGIAEWQSSLHSCIYE.

ATP is bound by residues Lys5, Phe53, Arg81, Thr87, Arg98, and Asn108. His111 serves as the catalytic Pros-phosphohistidine intermediate.

The protein belongs to the NDK family. Requires Mg(2+) as cofactor.

It carries out the reaction a 2'-deoxyribonucleoside 5'-diphosphate + ATP = a 2'-deoxyribonucleoside 5'-triphosphate + ADP. The catalysed reaction is a ribonucleoside 5'-diphosphate + ATP = a ribonucleoside 5'-triphosphate + ADP. Functionally, major role in the synthesis of nucleoside triphosphates other than ATP. The ATP gamma phosphate is transferred to the NDP beta phosphate via a ping-pong mechanism, using a phosphorylated active-site intermediate. The sequence is that of Nucleoside diphosphate kinase from Solanum lycopersicum (Tomato).